The chain runs to 400 residues: Elongation factor Tu (400 aa).

In terms of domain architecture, tr-type G spans 10–208; it reads KPHVNVGTIG…AMDNYIPDPQ (199 aa). The interval 19–26 is G1; it reads GHIDHGKS. A GTP-binding site is contributed by 19-26; it reads GHIDHGKS. Position 26 (serine 26) interacts with Mg(2+). The tract at residues 60-64 is G2; it reads GITIN. The tract at residues 81–84 is G3; the sequence is DCPG. GTP-binding positions include 81–85 and 136–139; these read DCPGH and NKTD. Positions 136-139 are G4; it reads NKTD. Residues 174–176 form a G5 region; that stretch reads SAL.

The protein belongs to the TRAFAC class translation factor GTPase superfamily. Classic translation factor GTPase family. EF-Tu/EF-1A subfamily. Monomer.

The protein localises to the cytoplasm. It carries out the reaction GTP + H2O = GDP + phosphate + H(+). In terms of biological role, GTP hydrolase that promotes the GTP-dependent binding of aminoacyl-tRNA to the A-site of ribosomes during protein biosynthesis. The sequence is that of Elongation factor Tu from Thermotoga maritima (strain ATCC 43589 / DSM 3109 / JCM 10099 / NBRC 100826 / MSB8).